A 746-amino-acid polypeptide reads, in one-letter code: Tudor domain-containing protein krimp (746 aa).

Residues 1–310 are involved in homooligomerization; the sequence is MNLEDISMIM…RDIYNQILKD (310 aa). Residues 311–489 are non-canonical tudor domain; the sequence is MAAFPENTIV…PAGITEDDMA (179 aa). A C3H1-type zinc finger spans residues 511-540; that stretch reads KDEQRICRHYDPKLNGCFKGNNCRFAHEPF. The Tudor domain occupies 613–670; the sequence is KPRLLDIVLALYSDGCFYRAQIIDEFPSEYMIFYVDYGNTEFVPLSCLAPCENVDSFK.

This sequence belongs to the Tudor domain containing protein family. As to quaternary structure, homooligomerizes (via N-terminus). Component of the ping-pong piRNA processing (4P) complex consisting of krimp, aub and AGO3; a single molecule of krimp can bind both aub and AGO3 without the need for homooligomerization. Interacts (via canonical tudor domain) with aub (via N-terminus when symmetrically dimethylated on arginine residues). Interacts (via non-canonical tudor domain) with AGO3 (via N-terminus when unmethylated on arginine residues); this interaction leads to symmetrical dimethylation on AGO3 arginine residues and its subsequent dissociation from krimp. Krimp associated AGO3 is mostly free of piRNA binding and the interaction plays an important role in the loading of AGO3 with piRNAs; piRNA binding stimulates methylation of ACO3 by the csul/PRMT5 methylosome complex and promotes dissociation of the two proteins. As to expression, widely expressed in female germline cells, including differentiating germ cells in germarium and egg chambers (at protein level).

The protein localises to the cytoplasm. It is found in the perinuclear region. It localises to the cytoplasmic ribonucleoprotein granule. Stable structural component of the perinuclear meiotic nuage, a germline-specific subcellular membraneless ribonucleoprotein compartment involved in production of transposable element-repressing Piwi-interacting RNA (piRNA)-induced silencing complexes (piRISCs), which are essential for maintaining germline integrity during oogenesis. Scaffold component of the ping-pong piRNA processing (4P) complex that recruits the Piwi proteins aub and AGO3 to specific subregions of the nuage where it coordinates their activity in the ping-pong amplification step of secondary piRNA biogenesis. Binds methylated aub, which is associated with piRNA, and unmethylated AGO3, which is not associated with piRNA, bringing the Piwi proteins into close proximity and facilitating the loading of freshly cut piRNAs generated by aub onto AGO3. Promotes asymmetric ping-pong amplification by aub and AGO3 to bias production towards antisense piRNAs capable of silencing transposable elements. Required for symmetrical dimethylation of AGO3, probably by recruitment to the nuage where methylosome components are located; dimethylation promotes AGO3 dissociation and interaction with other tudor-domain containing proteins such as tud. Required for the recruitment of mael to the perinuclear meiotic nuage. Required for the recruitment of aub to the nuage in testes but not in ovaries. Involved in repression of long interspersed nuclear elements (LINEs) including HeT-A, I-element LINEs and possibly mst40, but not TART LINEs. The protein is Tudor domain-containing protein krimp of Drosophila melanogaster (Fruit fly).